The primary structure comprises 81 residues: Antimicrobial peptide Con22 (81 aa).

Positions 1–22 (MNAKVMLVCLLVTMLVMEPAEA) are cleaved as a signal peptide. Residues 66 to 81 (EAGQIPFDEFMNVLYS) constitute a propeptide that is removed on maturation.

This sequence belongs to the non-disulfide-bridged peptide (NDBP) superfamily. Long chain multifunctional peptide (group 2) family. In terms of tissue distribution, expressed by the venom gland.

It localises to the secreted. The protein resides in the target cell membrane. Its function is as follows. At high concentrations, acts as a pore former in cellular membranes and causes the leakage of the cells. At submicromolar concentrations, degranulates granulocytes and has a weak hemolytic activity against human erythrocytes. Also strongly inhibits the production of superoxide anions. Has a strong antibacterial activity against Gram-negative bacteria but is less active against Gram-positive bacteria. Also has antifungal activity. The chain is Antimicrobial peptide Con22 from Urodacus yaschenkoi (Inland robust scorpion).